The primary structure comprises 619 residues: ATP-dependent zinc metalloprotease FtsH 1 (619 aa).

The Cytoplasmic segment spans residues 1–8; that stretch reads MADEKRPA. Residues 9–29 form a helical membrane-spanning segment; sequence SRAWLGYLLIAVGILVLSGIV. Residues 30 to 108 lie on the Periplasmic side of the membrane; the sequence is RSRGRPLVPY…RIEAKSPQTS (79 aa). The helical transmembrane segment at 109-129 threads the bilayer; sequence VWMQVAIWMLPLVLINAAFFM. The Cytoplasmic segment spans residues 130-619; the sequence is MLRRAGQGAG…KIAVGPPSAA (490 aa). 203–210 serves as a coordination point for ATP; sequence GPPGTGKT. H426 provides a ligand contact to Zn(2+). E427 is an active-site residue. H430 and D503 together coordinate Zn(2+).

The protein in the central section; belongs to the AAA ATPase family. It in the C-terminal section; belongs to the peptidase M41 family. In terms of assembly, homohexamer. It depends on Zn(2+) as a cofactor.

It localises to the cell inner membrane. In terms of biological role, acts as a processive, ATP-dependent zinc metallopeptidase for both cytoplasmic and membrane proteins. Plays a role in the quality control of integral membrane proteins. The chain is ATP-dependent zinc metalloprotease FtsH 1 from Sorangium cellulosum (strain So ce56) (Polyangium cellulosum (strain So ce56)).